The primary structure comprises 361 residues: UDP-3-O-acylglucosamine N-acyltransferase (361 aa).

Residue His253 is the Proton acceptor of the active site.

It belongs to the transferase hexapeptide repeat family. LpxD subfamily. Homotrimer.

The catalysed reaction is a UDP-3-O-[(3R)-3-hydroxyacyl]-alpha-D-glucosamine + a (3R)-hydroxyacyl-[ACP] = a UDP-2-N,3-O-bis[(3R)-3-hydroxyacyl]-alpha-D-glucosamine + holo-[ACP] + H(+). It participates in bacterial outer membrane biogenesis; LPS lipid A biosynthesis. Its function is as follows. Catalyzes the N-acylation of UDP-3-O-acylglucosamine using 3-hydroxyacyl-ACP as the acyl donor. Is involved in the biosynthesis of lipid A, a phosphorylated glycolipid that anchors the lipopolysaccharide to the outer membrane of the cell. In Burkholderia thailandensis (strain ATCC 700388 / DSM 13276 / CCUG 48851 / CIP 106301 / E264), this protein is UDP-3-O-acylglucosamine N-acyltransferase.